We begin with the raw amino-acid sequence, 352 residues long: Quinolinate synthase (352 aa).

Residues His48 and Ser69 each coordinate iminosuccinate. Cys114 lines the [4Fe-4S] cluster pocket. Iminosuccinate is bound by residues 140 to 142 (YAN) and Ser157. A [4Fe-4S] cluster-binding site is contributed by Cys201. Iminosuccinate is bound by residues 227-229 (HPE) and Thr244. Cys298 serves as a coordination point for [4Fe-4S] cluster.

This sequence belongs to the quinolinate synthase family. Type 1 subfamily. It depends on [4Fe-4S] cluster as a cofactor.

The protein resides in the cytoplasm. It carries out the reaction iminosuccinate + dihydroxyacetone phosphate = quinolinate + phosphate + 2 H2O + H(+). It functions in the pathway cofactor biosynthesis; NAD(+) biosynthesis; quinolinate from iminoaspartate: step 1/1. Catalyzes the condensation of iminoaspartate with dihydroxyacetone phosphate to form quinolinate. The protein is Quinolinate synthase of Pseudomonas syringae pv. tomato (strain ATCC BAA-871 / DC3000).